The sequence spans 383 residues: Probable cell wall hydrolase LytN (383 aa).

The first 49 residues, 1 to 49 (MFVYYCKECFIMNKQQSKVRYSIRKVSIGILSISIGMFLALGMSNKAYA), serve as a signal peptide directing secretion. Residues 175–219 (QIYTVKKGDTLSAIALKYKTTVSNIQNTNNIANPNLIFIGQKLKV) enclose the LysM domain. The 138-residue stretch at 241–378 (NSSTLNYLKT…NYENDMIFIR (138 aa)) folds into the Peptidase C51 domain.

The protein localises to the secreted. Functionally, probably involved in peptidoglycan hydrolysis. The sequence is that of Probable cell wall hydrolase LytN (lytN) from Staphylococcus aureus (strain MSSA476).